A 437-amino-acid chain; its full sequence is Ribulose bisphosphate carboxylase/oxygenase activase, chloroplastic (437 aa).

Residues 1 to 10 (MATAVSTIGS) are compositionally biased toward polar residues. The tract at residues 1-26 (MATAVSTIGSVNRAPPNLNGSSSSAS) is disordered. Position 165 to 172 (165 to 172 (GGKGQGKS)) interacts with ATP.

Belongs to the RuBisCO activase family.

It is found in the plastid. It localises to the chloroplast stroma. Its function is as follows. Activation of RuBisCO (ribulose-1,5-bisphosphate carboxylase/oxygenase; EC 4.1.1.39) involves the ATP-dependent carboxylation of the epsilon-amino group of lysine leading to a carbamate structure. The sequence is that of Ribulose bisphosphate carboxylase/oxygenase activase, chloroplastic (RCA) from Malus domestica (Apple).